The sequence spans 605 residues: UvrABC system protein C (605 aa).

The GIY-YIG domain maps to 14-92 (QSCGVYKMIG…IKSLKPSYNI (79 aa)). Residues 202–237 (KEVQRQLFSTMEKCSREMNYELAAVYRDRLKFLQQI) form the UVR domain.

This sequence belongs to the UvrC family. As to quaternary structure, interacts with UvrB in an incision complex.

It localises to the cytoplasm. Its function is as follows. The UvrABC repair system catalyzes the recognition and processing of DNA lesions. UvrC both incises the 5' and 3' sides of the lesion. The N-terminal half is responsible for the 3' incision and the C-terminal half is responsible for the 5' incision. This is UvrABC system protein C from Wolbachia pipientis subsp. Culex pipiens (strain wPip).